Consider the following 1755-residue polypeptide: Transposon Ty1-ER2 Gag-Pol polyprotein (1755 aa).

3 stretches are compositionally biased toward polar residues: residues 1-10, 48-60, and 127-152; these read MESQQLSNYP, TKAN…TPAS, and QSQF…GNTF. Disordered regions lie at residues 1 to 93, 126 to 173, and 352 to 421; these read MESQ…MMTQ, PQSQ…RPPP, and GSRN…SKST. A compositionally biased stretch (low complexity) spans 153–165; sequence TDSSSADSDMTST. Residues 299-401 are RNA-binding; that stretch reads NNGIHINNKV…NSKSKTARAH (103 aa). The segment covering 402–418 has biased composition (low complexity); sequence NVSTSNNSPSTDNDSIS. Asp-461 functions as the For protease activity; shared with dimeric partner in the catalytic mechanism. Residues 583 to 640 form an integrase-type zinc finger-like region; that stretch reads NVHTSESTRKYPYPFIHRMLAHANAQTIRYSLKNNTITYFNESDVDWSSAIDYQCPDC. The Integrase catalytic domain maps to 660 to 835; it reads NSYEPFQYLH…AGLDISTLLP (176 aa). The Mg(2+) site is built by Asp-671 and Asp-736. The tract at residues 958 to 1170 is disordered; that stretch reads AVSPTDSTPP…SSLGGIGDSN (213 aa). Residues 960–969 show a composition bias toward low complexity; the sequence is SPTDSTPPST. Residues 1005 to 1015 show a composition bias toward polar residues; it reads STPQISDIEST. A compositionally biased stretch (basic and acidic residues) spans 1038-1053; it reads ESSHASKSKDFRHSDS. Composition is skewed to polar residues over residues 1054–1082 and 1095–1106; these read YSDN…QTSE and SIDTSSSESNSL. The Bipartite nuclear localization signal motif lies at 1178–1212; it reads KKRSLEDNETEIKVSRDTWNTKNMRSLEPPRSKKR. The region spanning 1338–1476 is the Reverse transcriptase Ty1/copia-type domain; sequence NNYYITQLDI…DILGLEIKYQ (139 aa). Mg(2+) is bound by residues Asp-1346, Asp-1427, Asp-1428, Asp-1610, Glu-1652, and Asp-1685. Positions 1610–1752 constitute an RNase H Ty1/copia-type domain; it reads DASYGNQPYY…IKTFKLLTNK (143 aa).

As to quaternary structure, the capsid protein forms a homotrimer, from which the VLPs are assembled. The protease is a homodimer, whose active site consists of two apposed aspartic acid residues. Initially, virus-like particles (VLPs) are composed of the structural unprocessed proteins Gag and Gag-Pol, and also contain the host initiator methionine tRNA (tRNA(i)-Met) which serves as a primer for minus-strand DNA synthesis, and a dimer of genomic Ty RNA. Processing of the polyproteins occurs within the particle and proceeds by an ordered pathway, called maturation. First, the protease (PR) is released by autocatalytic cleavage of the Gag-Pol polyprotein yielding capsid protein p45 and a Pol-p154 precursor protein. This cleavage is a prerequisite for subsequent processing of Pol-p154 at the remaining sites to release the mature structural and catalytic proteins. Maturation takes place prior to the RT reaction and is required to produce transposition-competent VLPs.

The protein localises to the cytoplasm. It localises to the nucleus. The enzyme catalyses DNA(n) + a 2'-deoxyribonucleoside 5'-triphosphate = DNA(n+1) + diphosphate. It catalyses the reaction Endonucleolytic cleavage to 5'-phosphomonoester.. Capsid protein (CA) is the structural component of the virus-like particle (VLP), forming the shell that encapsulates the retrotransposons dimeric RNA genome. The particles are assembled from trimer-clustered units and there are holes in the capsid shells that allow for the diffusion of macromolecules. CA also has nucleocapsid-like chaperone activity, promoting primer tRNA(i)-Met annealing to the multipartite primer-binding site (PBS), dimerization of Ty1 RNA and initiation of reverse transcription. Functionally, the aspartyl protease (PR) mediates the proteolytic cleavages of the Gag and Gag-Pol polyproteins after assembly of the VLP. Its function is as follows. Reverse transcriptase/ribonuclease H (RT) is a multifunctional enzyme that catalyzes the conversion of the retro-elements RNA genome into dsDNA within the VLP. The enzyme displays a DNA polymerase activity that can copy either DNA or RNA templates, and a ribonuclease H (RNase H) activity that cleaves the RNA strand of RNA-DNA heteroduplexes during plus-strand synthesis and hydrolyzes RNA primers. The conversion leads to a linear dsDNA copy of the retrotransposon that includes long terminal repeats (LTRs) at both ends. In terms of biological role, integrase (IN) targets the VLP to the nucleus, where a subparticle preintegration complex (PIC) containing at least integrase and the newly synthesized dsDNA copy of the retrotransposon must transit the nuclear membrane. Once in the nucleus, integrase performs the integration of the dsDNA into the host genome. This chain is Transposon Ty1-ER2 Gag-Pol polyprotein (TY1B-ER2), found in Saccharomyces cerevisiae (strain ATCC 204508 / S288c) (Baker's yeast).